The chain runs to 309 residues: Methionyl-tRNA formyltransferase (309 aa).

A (6S)-5,6,7,8-tetrahydrofolate-binding site is contributed by 107–110 (SLLP).

This sequence belongs to the Fmt family.

It carries out the reaction L-methionyl-tRNA(fMet) + (6R)-10-formyltetrahydrofolate = N-formyl-L-methionyl-tRNA(fMet) + (6S)-5,6,7,8-tetrahydrofolate + H(+). Its function is as follows. Attaches a formyl group to the free amino group of methionyl-tRNA(fMet). The formyl group appears to play a dual role in the initiator identity of N-formylmethionyl-tRNA by promoting its recognition by IF2 and preventing the misappropriation of this tRNA by the elongation apparatus. The protein is Methionyl-tRNA formyltransferase of Borrelia hermsii (strain HS1 / DAH).